We begin with the raw amino-acid sequence, 101 residues long: Small nuclear ribonucleoprotein Sm D3 (101 aa).

Residues 6–78 (IPVKLLNEAQ…IKFIVVPDLL (73 aa)) enclose the Sm domain.

This sequence belongs to the snRNP core protein family. In terms of assembly, component of the Sm core complex, present in spliceosomal snRNP U1, U2, U4/U6 and U5. The core complex contains SMB1, SMD1, SMD2, SMD3, SME1, SMX3 and SMX2 (Sm proteins B, D1, D2, D3, E, F and G, respectively), and is probably a heptameric ring structure. SMD3 specifically interacts with SMB1. Belongs to the CWC complex (or CEF1-associated complex), a spliceosome sub-complex reminiscent of a late-stage spliceosome composed of the U2, U5 and U6 snRNAs and at least BUD13, BUD31, BRR2, CDC40, CEF1, CLF1, CUS1, CWC2, CWC15, CWC21, CWC22, CWC23, CWC24, CWC25, CWC27, ECM2, HSH155, IST3, ISY1, LEA1, MSL1, NTC20, PRP8, PRP9, PRP11, PRP19, PRP21, PRP22, PRP45, PRP46, SLU7, SMB1, SMD1, SMD2, SMD3, SMX2, SMX3, SNT309, SNU114, SPP2, SYF1, SYF2, RSE1 and YJU2. Component of the U4/U6-U5 tri-snRNP complex composed of the U4, U6 and U5 snRNAs and at least PRP3, PRP4, PRP6, PRP8, PRP18, PRP31, PRP38, SNU13, SNU23, SNU66, SNU114, SPP381, SMB1, SMD1, SMD2, SMD3, SMX2, SMX3, LSM2, LSM3, LSM4, LSM5, LSM6, LSM7, LSM8, BRR2 and DIB1.

Its subcellular location is the cytoplasm. It is found in the cytosol. The protein resides in the nucleus. In terms of biological role, plays a role in pre-mRNA splicing as a core component of the spliceosomal U1, U2, U4 and U5 small nuclear ribonucleoproteins (snRNPs), the building blocks of the spliceosome. Also binds telomerase RNA and is required for its accumulation. In Saccharomyces cerevisiae (strain ATCC 204508 / S288c) (Baker's yeast), this protein is Small nuclear ribonucleoprotein Sm D3 (SMD3).